Here is a 920-residue protein sequence, read N- to C-terminus: DNA ligase (920 aa).

NAD(+) is bound by residues 90-94, 139-140, and glutamate 173; these read DAAYD and SL. The N6-AMP-lysine intermediate role is filled by lysine 175. NAD(+)-binding residues include arginine 196, glutamate 235, lysine 360, and lysine 384. Positions 481, 484, 500, and 506 each coordinate Zn(2+). Residues 659-691 form a disordered region; that stretch reads RAQGEAAIESAETQGDTASETTGAPTGAEAPLG. A compositionally biased stretch (polar residues) spans 669–682; that stretch reads AETQGDTASETTGA. A BRCT domain is found at 839-920; sequence SLPQTLAGKT…FAQLLATGTI (82 aa).

It belongs to the NAD-dependent DNA ligase family. LigA subfamily. Mg(2+) is required as a cofactor. Mn(2+) serves as cofactor.

The enzyme catalyses NAD(+) + (deoxyribonucleotide)n-3'-hydroxyl + 5'-phospho-(deoxyribonucleotide)m = (deoxyribonucleotide)n+m + AMP + beta-nicotinamide D-nucleotide.. In terms of biological role, DNA ligase that catalyzes the formation of phosphodiester linkages between 5'-phosphoryl and 3'-hydroxyl groups in double-stranded DNA using NAD as a coenzyme and as the energy source for the reaction. It is essential for DNA replication and repair of damaged DNA. This is DNA ligase from Bifidobacterium longum (strain NCC 2705).